Reading from the N-terminus, the 153-residue chain is Small ribosomal subunit protein uS5 (153 aa).

The 64-residue stretch at 15–78 folds into the S5 DRBM domain; the sequence is FQEVVVNVGR…DDAFKNLIHV (64 aa).

This sequence belongs to the universal ribosomal protein uS5 family. As to quaternary structure, part of the 30S ribosomal subunit. Contacts proteins S4 and S8.

Functionally, with S4 and S12 plays an important role in translational accuracy. In terms of biological role, located at the back of the 30S subunit body where it stabilizes the conformation of the head with respect to the body. This Helicobacter acinonychis (strain Sheeba) protein is Small ribosomal subunit protein uS5.